Reading from the N-terminus, the 485-residue chain is MAAAAGRRMGPSWWGFSPALDLQVHCLQGTIQHLTSSDGLPELNILLVGGGDGRHLLKTICQASRWPHRKLKFFIIESDLELLARHMLFLSLALEHPEQMGLQEKSELFLELFGNSLIRSKTANYLQEKSELFIQCVTDPDYQQCVMPFLNLSSIKFKERDELEDIFKFWRIADPKLFPIDKYWDGKNRRHLGTRYDSRKGAYDWDLSMKLHDRGAGVINSREYNYWREKGVAFMNREGVYDVPNKTLASQMVVPQSSGKVLTRGYWGDITTSPYVAFGIETEEKSLLETANGVHVKSAQEIALHNIISLFHELATGKVYSVPASGQAEAELVKPVGDYKTNGDQTAAETIEEKAEAEDTKQSKYKGFITLNNVEIHFLPLSWVNELHCKGRFTNFFNLLYFSSSMVHLLKPEYKVIAASKATLVLELTKFMVDLQADKVQSYVSIVTKLAQGAGFTSDEPIDWKTHYIARFERGDDSVELQTAQ.

This sequence belongs to the DNAAF3 family.

The protein resides in the cytoplasm. It localises to the dynein axonemal particle. Functionally, required for the assembly of axonemal inner and outer dynein arms. Involved in preassembly of dyneins into complexes before their transport into cilia. The chain is Dynein axonemal assembly factor 3 (dnaaf3) from Xenopus laevis (African clawed frog).